Reading from the N-terminus, the 188-residue chain is Transcription factor FapR (188 aa).

This sequence belongs to the FapR family.

Functionally, transcriptional factor involved in regulation of membrane lipid biosynthesis by repressing genes involved in fatty acid and phospholipid metabolism. In Bacillus licheniformis (strain ATCC 14580 / DSM 13 / JCM 2505 / CCUG 7422 / NBRC 12200 / NCIMB 9375 / NCTC 10341 / NRRL NRS-1264 / Gibson 46), this protein is Transcription factor FapR.